Reading from the N-terminus, the 222-residue chain is N-(5'-phosphoribosyl)anthranilate isomerase (222 aa).

The protein belongs to the TrpF family.

It carries out the reaction N-(5-phospho-beta-D-ribosyl)anthranilate = 1-(2-carboxyphenylamino)-1-deoxy-D-ribulose 5-phosphate. It participates in amino-acid biosynthesis; L-tryptophan biosynthesis; L-tryptophan from chorismate: step 3/5. The sequence is that of N-(5'-phosphoribosyl)anthranilate isomerase from Beijerinckia indica subsp. indica (strain ATCC 9039 / DSM 1715 / NCIMB 8712).